Consider the following 148-residue polypeptide: MKVILLEPLENLGDVGQVVDVKPGYARNYLLPRGLAVLATESNLKALEARIRAQAKRLAERKAEAERLKEILENLTLTIPVRAGETKIYGSVTAKDIAEALSRQHGITIDPKRLALEKPIKELGEYVLTYKPHPEVPIQLKVSVVAQE.

This sequence belongs to the bacterial ribosomal protein bL9 family.

In terms of biological role, binds to the 23S rRNA. The polypeptide is Large ribosomal subunit protein bL9 (Thermus thermophilus (strain ATCC BAA-163 / DSM 7039 / HB27)).